A 390-amino-acid chain; its full sequence is Homoserine O-succinyltransferase (390 aa).

The 311-residue stretch at 59 to 369 folds into the AB hydrolase-1 domain; sequence NAVLVCHALN…PHGHDAFLLD (311 aa). Ser-165 (nucleophile) is an active-site residue. Position 235 (Arg-235) interacts with substrate. Active-site residues include Asp-330 and His-363. Asp-364 provides a ligand contact to substrate.

This sequence belongs to the AB hydrolase superfamily. MetX family. As to quaternary structure, homodimer.

The protein localises to the cytoplasm. The enzyme catalyses L-homoserine + succinyl-CoA = O-succinyl-L-homoserine + CoA. It participates in amino-acid biosynthesis; L-methionine biosynthesis via de novo pathway; O-succinyl-L-homoserine from L-homoserine: step 1/1. Functionally, transfers a succinyl group from succinyl-CoA to L-homoserine, forming succinyl-L-homoserine. In Cupriavidus metallidurans (strain ATCC 43123 / DSM 2839 / NBRC 102507 / CH34) (Ralstonia metallidurans), this protein is Homoserine O-succinyltransferase.